Here is a 397-residue protein sequence, read N- to C-terminus: N-acetyllactosaminide beta-1,3-N-acetylglucosaminyltransferase 2 (397 aa).

At 1 to 7 (MSVGRRR) the chain is on the cytoplasmic side. A helical; Signal-anchor for type II membrane protein transmembrane segment spans residues 8 to 28 (IKLLGILMMANVFIYFIMEVS). Over 29–397 (KSSSQEKNGK…SQLQSAHLKC (369 aa)) the chain is Lumenal. N-linked (GlcNAc...) asparagine glycosylation is found at Asn-79, Asn-89, Asn-127, Asn-173, and Asn-219.

It belongs to the glycosyltransferase 31 family. As to quaternary structure, interacts with B3GNT8; this interaction greatly increases B3GNT2 catalytic activity, independently of B3GNT8 enzymatic activity. Requires Mn(2+) as cofactor. As to expression, ubiquitous.

It localises to the golgi apparatus membrane. The catalysed reaction is a beta-D-galactosyl-(1-&gt;4)-N-acetyl-beta-D-glucosaminyl derivative + UDP-N-acetyl-alpha-D-glucosamine = an N-acetyl-beta-D-glucosaminyl-(1-&gt;3)-beta-D-galactosyl-(1-&gt;4)-N-acetyl-beta-D-glucosaminyl derivative + UDP + H(+). It functions in the pathway protein modification; protein glycosylation. Its function is as follows. Beta-1,3-N-acetylglucosaminyltransferase involved in the synthesis of poly-N-acetyllactosamine. Catalyzes the initiation and elongation of poly-N-acetyllactosamine chains. Shows a marked preference for Gal(beta1-4)Glc(NAc)-based acceptors. Probably constitutes the main polylactosamine synthase. The polypeptide is N-acetyllactosaminide beta-1,3-N-acetylglucosaminyltransferase 2 (B3GNT2) (Homo sapiens (Human)).